Reading from the N-terminus, the 339-residue chain is MDFQTLHQLSKTELHCHLDGSLSLSCIRQLAKMIDRKLPATDDELRRLVQAPADSENLGDYLKAFDFVAPLLQTKKALQLAAYDVVEQAAEENVRYIEIRFAPVFSLAGGLSLVEATQAVIEGLHQGMATYDIMAKALVCGMRQLPNTDNQTMFKTTAPLLGSTLVGGDFAGNEADFPTNVCAPAIKTAQSLGVPLTFHAGECHCPQNIAEAVRLGIPRIGHATACFDQPALIEKIVETGTTVELCLTSNLQTKAARTLAEFPYQALKKAGAKITINTDNRTVSNTTLTQEYQRYQQAFGTTAVDFLAFNLNAIDAAFIPDADKKSLRDRLHQDYATYC.

Zn(2+)-binding residues include H15 and H17. Substrate contacts are provided by H17, D19, and G172. H199 serves as a coordination point for Zn(2+). The Proton donor role is filled by E202. D279 lines the Zn(2+) pocket.

The protein belongs to the metallo-dependent hydrolases superfamily. Adenosine and AMP deaminases family. Adenosine deaminase subfamily. Zn(2+) serves as cofactor.

The enzyme catalyses adenosine + H2O + H(+) = inosine + NH4(+). It catalyses the reaction 2'-deoxyadenosine + H2O + H(+) = 2'-deoxyinosine + NH4(+). Functionally, catalyzes the hydrolytic deamination of adenosine and 2-deoxyadenosine. This chain is Adenosine deaminase, found in Lacticaseibacillus casei (strain BL23) (Lactobacillus casei).